A 156-amino-acid chain; its full sequence is Small ribosomal subunit protein uS7 (156 aa).

This sequence belongs to the universal ribosomal protein uS7 family. As to quaternary structure, part of the 30S ribosomal subunit. Contacts proteins S9 and S11.

In terms of biological role, one of the primary rRNA binding proteins, it binds directly to 16S rRNA where it nucleates assembly of the head domain of the 30S subunit. Is located at the subunit interface close to the decoding center, probably blocks exit of the E-site tRNA. The polypeptide is Small ribosomal subunit protein uS7 (Shewanella loihica (strain ATCC BAA-1088 / PV-4)).